The sequence spans 265 residues: MSRIQKTFAALAAQQKKGLIPFITAGDPAPALTVDLMHALVAGGADVIELGVPFSDPMADGPVIQRASERALAQGVSLTQVLAWVTEFRKTNATTPVVLMGYANPIERMGEETFAKAASAAGVDGVLVVDYPPEECESFAALMRANQMDPIFLLAPTSTDDRIAAVAKVASGYLYYVSLTGVTGSATLDLESVAARLPLIKQHANLPVGVGFGIRDAQTARAIGSVADAVVIGSRLVQLLEDAPREKAVDSLRAFIADIRQALDA.

Catalysis depends on proton acceptor residues Glu-49 and Asp-60.

It belongs to the TrpA family. In terms of assembly, tetramer of two alpha and two beta chains.

It catalyses the reaction (1S,2R)-1-C-(indol-3-yl)glycerol 3-phosphate + L-serine = D-glyceraldehyde 3-phosphate + L-tryptophan + H2O. It functions in the pathway amino-acid biosynthesis; L-tryptophan biosynthesis; L-tryptophan from chorismate: step 5/5. In terms of biological role, the alpha subunit is responsible for the aldol cleavage of indoleglycerol phosphate to indole and glyceraldehyde 3-phosphate. The protein is Tryptophan synthase alpha chain of Cupriavidus metallidurans (strain ATCC 43123 / DSM 2839 / NBRC 102507 / CH34) (Ralstonia metallidurans).